The following is a 607-amino-acid chain: DNA mismatch repair protein MutL (607 aa).

It belongs to the DNA mismatch repair MutL/HexB family.

This protein is involved in the repair of mismatches in DNA. It is required for dam-dependent methyl-directed DNA mismatch repair. May act as a 'molecular matchmaker', a protein that promotes the formation of a stable complex between two or more DNA-binding proteins in an ATP-dependent manner without itself being part of a final effector complex. The sequence is that of DNA mismatch repair protein MutL from Paramagnetospirillum magneticum (strain ATCC 700264 / AMB-1) (Magnetospirillum magneticum).